A 298-amino-acid polypeptide reads, in one-letter code: ATP phosphoribosyltransferase (298 aa).

It belongs to the ATP phosphoribosyltransferase family. Long subfamily. It depends on Mg(2+) as a cofactor.

It localises to the cytoplasm. It carries out the reaction 1-(5-phospho-beta-D-ribosyl)-ATP + diphosphate = 5-phospho-alpha-D-ribose 1-diphosphate + ATP. It participates in amino-acid biosynthesis; L-histidine biosynthesis; L-histidine from 5-phospho-alpha-D-ribose 1-diphosphate: step 1/9. Its activity is regulated as follows. Feedback inhibited by histidine. Catalyzes the condensation of ATP and 5-phosphoribose 1-diphosphate to form N'-(5'-phosphoribosyl)-ATP (PR-ATP). Has a crucial role in the pathway because the rate of histidine biosynthesis seems to be controlled primarily by regulation of HisG enzymatic activity. This is ATP phosphoribosyltransferase from Vibrio vulnificus (strain CMCP6).